A 351-amino-acid chain; its full sequence is Alcohol dehydrogenase 5 (351 aa).

Zn(2+) is bound by residues C47, H70, C101, C104, C107, C115, and C183. NAD(+)-binding positions include 181–187, D205, K210, 272–274, and R344; these read GACGGLG and VGM.

Belongs to the zinc-containing alcohol dehydrogenase family. It depends on Zn(2+) as a cofactor.

It carries out the reaction a primary alcohol + NAD(+) = an aldehyde + NADH + H(+). It catalyses the reaction a secondary alcohol + NAD(+) = a ketone + NADH + H(+). The chain is Alcohol dehydrogenase 5 (ADH5) from Saccharomyces pastorianus (Lager yeast).